The following is a 115-amino-acid chain: Ig kappa chain V region 3315 (115 aa).

Positions 1 to 24 are framework-1; it reads AQIVMTQTPSSVSAAVGGTVTINC. Positions 25 to 37 are complementarity-determining-1; it reads QSSQSVYENGRLS. Positions 38 to 52 are framework-2; the sequence is WFQQKPGQPPKRLIY. Residues 53–59 form a complementarity-determining-2 region; the sequence is RASTLAS. The framework-3 stretch occupies residues 60-91; it reads GVSSRFTGSGSGTQFTLSISDVQCDDAATYYC. The segment at 92-104 is complementarity-determining-3; that stretch reads LGNYDCSSGDSFT. Residues 105-114 form a framework-4 region; it reads FGGGTEVVVK.

In Oryctolagus cuniculus (Rabbit), this protein is Ig kappa chain V region 3315.